A 758-amino-acid polypeptide reads, in one-letter code: MSMFNKVTKTFQWGDKTVVMETGEIARQATGAVLVNIDDTVVLATVVASKSAKPGQDFFPLTVDYIEKTYAAGKIPGSFFKREAKPSELETLTSRLIDRPIRPLFPEGFYNEVHVVIHTVSLNPEVDADIAAMIAVSAALSVSGIPFNGPIGAARVGYINGEYVLNPGQTARKNSQMDLVVAGTEAAVLMVESEAQQLSEDIMLGAVVFGHEQGRIAINAIHELVRDAGKPVWDWQPAAKDEPFIAKVTQLAEEKLRAAYQIRSKQARTQALREASASVLESLKAEGADFDAVKVEALLFDIEAKIVRSQILAGEPRIDGRDTRTVRPIEIRNSVLPRTHGSALFTRGETQALVVSTLGTERDAQRIDALAGEFEDRFMFHYNMPPFATGEVGRMGSTKRREIGHGRLAKRALVAVLPTKEEFPYTIRVVSEITESNGSSSMASVCGGCLSMMDAGVPMKAHVAGIAMGLIKEDNRFAVLTDILGDEDHLGDMDFKVAGTTAGITALQMDIKIQGITKEIMQVALAQAKEARLHILGKMQEAMGEAKTEVSSFAPKLYTMKINPEKIRDVIGKGGAVIRALTEETGTQINIDEDGTITIASTDSAKADEAKRRIEQITAEVEIGKIYEGPVVKILDFGALINLLPGKDGLLHISQIAHERVEKVTDYLTEGQVVKVKVLETDEKGRVKLSMRALLDRPMGDSGRPAPAERGERGDRGDRGDRPERGERRERREPAGADQQQQQQQSTGAGEHSGQMDA.

The Mg(2+) site is built by aspartate 488 and aspartate 494. A KH domain is found at 555 to 614; sequence PKLYTMKINPEKIRDVIGKGGAVIRALTEETGTQINIDEDGTITIASTDSAKADEAKRRI. One can recognise an S1 motif domain in the interval 624-692; sequence GKIYEGPVVK…EKGRVKLSMR (69 aa). The tract at residues 692–758 is disordered; sequence RALLDRPMGD…AGEHSGQMDA (67 aa). The span at 707–735 shows a compositional bias: basic and acidic residues; sequence PAERGERGDRGDRGDRPERGERRERREPA. Positions 736-745 are enriched in low complexity; sequence GADQQQQQQQ.

The protein belongs to the polyribonucleotide nucleotidyltransferase family. It depends on Mg(2+) as a cofactor.

The protein resides in the cytoplasm. It catalyses the reaction RNA(n+1) + phosphate = RNA(n) + a ribonucleoside 5'-diphosphate. Involved in mRNA degradation. Catalyzes the phosphorolysis of single-stranded polyribonucleotides processively in the 3'- to 5'-direction. This Paracidovorax citrulli (strain AAC00-1) (Acidovorax citrulli) protein is Polyribonucleotide nucleotidyltransferase.